Here is a 681-residue protein sequence, read N- to C-terminus: MKKYIFNHVFFFLMLCGSNYLYSQDPWKLSADKPDSNNYYGETVANGMIGIISSPEPLKVKEVVLAGTYDIYKRGRVSSFIPNYNLLNMKLAFNGESVQTYNINNYKQELDMRNGAFTGSFQFKDLATVTYSYYALRHLPHCIMMVVNINTQKDTEINVENLLETPSSLNNQQNYFQNITNTHVNIPLLTSVAFTPTGRSKIAVSNTFLFDEGKKLQPEILHRMNDADMHAMSFDKKIKAGKTYSFALIGSLISSDHINDPYNEAERLTIYAALEGKSRLLNRHMQEWNSLWQSDIQVEGDPQAQQDIRSMLYHLYSFTRKSTSLSPSPMGLSGLGYNGHVFWDTEIWMFPPMLLLHPEIAKSMIEYRYQRLDAARKKAAIYGYDGAMFPWESADSGAEETPVNALTGAFEHHVTGDVAIAAWQYYLVTGDKEWLKEKGWPILKATAEFWASRVEKNDKGEYEIKNVVAADEWAENIDNNAYTNGTAIRNLQYASKCATVLGVIAPKEWTLIADKILISKMSNGVTREHDSYTDQNIKQADANLLAYPLKLITDKEQIERDLKYYQTKIPQSDTPAMTQAIFSLLYSRLEDSDQAYHWFKDAYQPNLNPPFRVISECKGGTNPYFSTGAGGVLQAVIMGFGGLDIDAAGGIKQVKSVLPKNWKKLTITGIGIEKKTFVLTH.

Positions 1–23 are cleaved as a signal peptide; that stretch reads MKKYIFNHVFFFLMLCGSNYLYS. Beta-D-glucose is bound by residues Arg74, Trp343, Asp344, Trp391, Glu392, Thr407, Glu472, Trp473, Lys538, Gln539, and Asp573. Catalysis depends on Glu472, which acts as the Proton donor. The active-site Proton acceptor is the Glu616.

The protein belongs to the glycosyl hydrolase 65 family. As to quaternary structure, homohexamer; dimer of trimers.

Its subcellular location is the periplasm. The enzyme catalyses kojibiose + H2O = beta-D-glucose + D-glucose. Its function is as follows. Glycosidase that specifically hydrolyzes kojibiose to beta-glucose and glucose. Also hydrolyzes, with lower catalytic efficiency, longer kojioligosaccharides (from kojitriose to kojipentaose) and shorter oligosaccharides produced by the degradation of dextran-containing alpha-1,2 branches. Probably acts on alpha-(1-&gt;2)-glucosyl isomaltooligosaccharides. Shows weak activity with nigerose but has no activity toward p-nitrophenyl alpha-glucopyranoside, which is a general substrate of exo-acting alpha-glucoside hydrolases. Has a strict specificity for alpha-1,2-glucosidic linkages. Catalyzes the hydrolytic reaction via an anomer-inverting mechanism. This is Kojibiose hydrolase from Flavobacterium johnsoniae (strain ATCC 17061 / DSM 2064 / JCM 8514 / BCRC 14874 / CCUG 350202 / NBRC 14942 / NCIMB 11054 / UW101) (Cytophaga johnsonae).